The chain runs to 315 residues: Zinc metalloproteinase nas-4 (315 aa).

Residues 1 to 20 form the signal peptide; that stretch reads MMTIQRYSLVFCAIFATCWT. Asn71 carries an N-linked (GlcNAc...) asparagine glycan. The 196-residue stretch at 95–290 folds into the Peptidase M12A domain; sequence NAIKQIYRRW…RKINKLYNCP (196 aa). 2 disulfides stabilise this stretch: Cys137-Cys289 and Cys160-Cys179. His187 serves as a coordination point for Zn(2+). Residue Glu188 is part of the active site. Positions 191 and 197 each coordinate Zn(2+). Positions 291-315 are disordered; it reads GVSGNNNNNNNNQINSNSIVNHPQV.

Requires Zn(2+) as cofactor. Digestive tract. Found in the pharynx cells of the procorpus, metacorpus, isthmus and terminal bulb, and in the terminal bulb lumen.

The protein resides in the secreted. Metalloprotease. May be involved in digestion. This is Zinc metalloproteinase nas-4 (nas-4) from Caenorhabditis elegans.